We begin with the raw amino-acid sequence, 603 residues long: D-3-phosphoglycerate dehydrogenase 1, chloroplastic (603 aa).

A chloroplast-targeting transit peptide spans 1 to 54 (MSATAAASSSIAVATNSLRNVTLSSRSPLPSAISVAFPSRGRNTLQRRLVLVSC). NAD(+) contacts are provided by residues 210-211 (KV), Asp-230, 289-291 (VAR), and Asp-315. Arg-291 is an active-site residue. Glu-320 is an active-site residue. The active-site Proton donor is the His-339. An NAD(+)-binding site is contributed by 339–342 (HLGA). An ACT domain is found at 531-603 (IILCRQVDQP…AVEEFVFLKL (73 aa)).

This sequence belongs to the D-isomer specific 2-hydroxyacid dehydrogenase family. As to expression, ubiquitous, but highly expressed in roots. Expressed in vasculature, root and shoot meristems, distal part of cotyledons and leaves, anther, stigma and pollen grains. Detected at the tip of the cotyledons in late embryos.

It is found in the plastid. It localises to the chloroplast. It catalyses the reaction (2R)-3-phosphoglycerate + NAD(+) = 3-phosphooxypyruvate + NADH + H(+). The protein operates within amino-acid biosynthesis; L-serine biosynthesis; L-serine from 3-phospho-D-glycerate: step 1/3. Its activity is regulated as follows. Partially inhibited by 5 mM serine. Its function is as follows. Involved in the plastidial phosphorylated pathway of serine biosynthesis (PPSB). Required for mature pollen development. In Arabidopsis thaliana (Mouse-ear cress), this protein is D-3-phosphoglycerate dehydrogenase 1, chloroplastic (PGDH1).